The chain runs to 648 residues: Threonine--tRNA ligase (648 aa).

A TGS domain is found at Met1–Thr63. The tract at residues Asp247–Pro544 is catalytic. Residues Cys344, His395, and His521 each coordinate Zn(2+).

This sequence belongs to the class-II aminoacyl-tRNA synthetase family. In terms of assembly, homodimer. It depends on Zn(2+) as a cofactor.

Its subcellular location is the cytoplasm. The catalysed reaction is tRNA(Thr) + L-threonine + ATP = L-threonyl-tRNA(Thr) + AMP + diphosphate + H(+). Functionally, catalyzes the attachment of threonine to tRNA(Thr) in a two-step reaction: L-threonine is first activated by ATP to form Thr-AMP and then transferred to the acceptor end of tRNA(Thr). Also edits incorrectly charged L-seryl-tRNA(Thr). The polypeptide is Threonine--tRNA ligase (Roseobacter denitrificans (strain ATCC 33942 / OCh 114) (Erythrobacter sp. (strain OCh 114))).